The primary structure comprises 59 residues: Crassipeptide cce9a (59 aa).

A propeptide spanning residues 1–30 is cleaved from the precursor; it reads ADNHARVAGPRAVASGRYATEKAFLQMMTR.

In terms of processing, contains 3 disulfide bonds. In terms of tissue distribution, expressed by the venom duct.

It is found in the secreted. Crassispirid snail peptide that induces sleep-like symptoms in young mice (12 and 14 days) and hyperactivity in older mice (16 days), when intracranially injected. The chain is Crassipeptide cce9a from Crassispira cerithina (Sea snail).